Consider the following 320-residue polypeptide: Malate dehydrogenase (320 aa).

Residues 10–15 (GSGMIG) and D34 contribute to the NAD(+) site. Substrate contacts are provided by R83 and R89. NAD(+) is bound by residues N96 and 119-121 (ITN). Substrate contacts are provided by N121 and R152. Catalysis depends on H176, which acts as the Proton acceptor.

It belongs to the LDH/MDH superfamily. MDH type 3 family.

The enzyme catalyses (S)-malate + NAD(+) = oxaloacetate + NADH + H(+). Catalyzes the reversible oxidation of malate to oxaloacetate. The sequence is that of Malate dehydrogenase from Maricaulis maris (strain MCS10) (Caulobacter maris).